Consider the following 160-residue polypeptide: Serine-protein kinase RsbW (160 aa).

This sequence belongs to the anti-sigma-factor family.

It carries out the reaction L-seryl-[protein] + ATP = O-phospho-L-seryl-[protein] + ADP + H(+). The enzyme catalyses L-threonyl-[protein] + ATP = O-phospho-L-threonyl-[protein] + ADP + H(+). Functionally, negative regulator of sigma-B activity. Phosphorylates and inactivates its specific antagonist protein, RsbV. Upon phosphorylation of RsbV, RsbW is released and binds to sigma-B, thereby blocking its ability to form an RNA polymerase holoenzyme (E-sigma-B). The sequence is that of Serine-protein kinase RsbW from Bacillus cereus (strain ATCC 10987 / NRS 248).